A 309-amino-acid chain; its full sequence is Homoserine kinase (309 aa).

91-101 provides a ligand contact to ATP; sequence PIGSGLGSSAC.

This sequence belongs to the GHMP kinase family. Homoserine kinase subfamily.

The protein localises to the cytoplasm. It carries out the reaction L-homoserine + ATP = O-phospho-L-homoserine + ADP + H(+). Its pathway is amino-acid biosynthesis; L-threonine biosynthesis; L-threonine from L-aspartate: step 4/5. Catalyzes the ATP-dependent phosphorylation of L-homoserine to L-homoserine phosphate. The sequence is that of Homoserine kinase from Escherichia fergusonii (strain ATCC 35469 / DSM 13698 / CCUG 18766 / IAM 14443 / JCM 21226 / LMG 7866 / NBRC 102419 / NCTC 12128 / CDC 0568-73).